An 887-amino-acid polypeptide reads, in one-letter code: Beta-galactosidase 14 (887 aa).

Positions 1–31 (MSKSSRIRMKSRTRYLIAILLVISLCSKASS) are cleaved as a signal peptide. Glu-197 serves as the catalytic Proton donor. Glu-268 serves as the catalytic Nucleophile. 4 N-linked (GlcNAc...) asparagine glycosylation sites follow: Asn-269, Asn-300, Asn-395, and Asn-785. In terms of domain architecture, SUEL-type lectin spans 752 to 838 (KDMRLKAVMR…KTLAVQVKCE (87 aa)). The span at 838 to 852 (EKKEGKQDEKKKKED) shows a compositional bias: basic and acidic residues. Residues 838–887 (EKKEGKQDEKKKKEDKDEEEEDDEDDDEEEEEEDKENKDTKDMENKNQDM) are disordered. The segment covering 853-871 (KDEEEEDDEDDDEEEEEED) has biased composition (acidic residues). Basic and acidic residues predominate over residues 872-887 (KENKDTKDMENKNQDM).

This sequence belongs to the glycosyl hydrolase 35 family.

The protein localises to the secreted. Its subcellular location is the extracellular space. It localises to the apoplast. The enzyme catalyses Hydrolysis of terminal non-reducing beta-D-galactose residues in beta-D-galactosides.. In Arabidopsis thaliana (Mouse-ear cress), this protein is Beta-galactosidase 14 (BGAL14).